Here is a 259-residue protein sequence, read N- to C-terminus: Triosephosphate isomerase (259 aa).

10–12 is a substrate binding site; it reads NWK. Catalysis depends on H102, which acts as the Electrophile. E172 acts as the Proton acceptor in catalysis. Residues G178, S218, and 239–240 each bind substrate; that span reads GG.

The protein belongs to the triosephosphate isomerase family. Homodimer.

It is found in the cytoplasm. The enzyme catalyses D-glyceraldehyde 3-phosphate = dihydroxyacetone phosphate. It participates in carbohydrate biosynthesis; gluconeogenesis. Its pathway is carbohydrate degradation; glycolysis; D-glyceraldehyde 3-phosphate from glycerone phosphate: step 1/1. Involved in the gluconeogenesis. Catalyzes stereospecifically the conversion of dihydroxyacetone phosphate (DHAP) to D-glyceraldehyde-3-phosphate (G3P). The polypeptide is Triosephosphate isomerase (Leifsonia xyli subsp. xyli (strain CTCB07)).